Reading from the N-terminus, the 492-residue chain is RNA-binding protein Nova-2 (492 aa).

The Bipartite nuclear localization signal motif lies at 10–26 (KRPLETPPEVVCTKRSN). The region spanning 32-99 (EYFLKVLIPS…EALNAVHSFI (68 aa)) is the KH 1 domain. Lysine 112 participates in a covalent cross-link: Glycyl lysine isopeptide (Lys-Gly) (interchain with G-Cter in SUMO2). 2 KH domains span residues 130–196 (AKQA…VSAI) and 406–473 (KELV…QYLI).

Interacts with PTBP2; the interaction is direct. As to expression, brain. Expression restricted to astrocytes.

Its subcellular location is the nucleus. In terms of biological role, functions to regulate alternative splicing in neurons by binding pre-mRNA in a sequence-specific manner to activate exon inclusion or exclusion. It binds specifically to the sequences 5'-YCAY-3' and regulates splicing in only a subset of regulated exons. Binding to an exonic 5'-YCAY-3' cluster changes the protein complexes assembled on pre-mRNA, blocking U1 snRNP binding and exon inclusion, whereas binding to an intronic 5'-YCAY-3' cluster enhances spliceosome assembly and exon inclusion. With NOVA1, they perform unique biological functions in different brain areas and cell types. Uniquely regulates alternative splicing events of a series of axon guidance related genes during cortical development, being essential for central nervous system development by regulating neural networks wiring. Regulates differentially alternative splicing on the same transcripts expressed in different neurons. This includes functional differences in transcripts expressed in cortical and cerebellar excitatory versus inhibitory neurons where is required for, respectively, development of laminar structure and motor coordination and synapse formation. Also the regulation the regulation of intron retention can sequester the trans-acting splicing factor PTBP2, acting as a variable cis-acting scaffolding platform for PTBP2 across various natural conditions. This is RNA-binding protein Nova-2 from Homo sapiens (Human).